The primary structure comprises 110 residues: Protein YcgL (110 aa).

The YcgL domain maps to 14–98; that stretch reads MFCVIYRSSK…PPEDLLKQHL (85 aa).

This is Protein YcgL from Salmonella arizonae (strain ATCC BAA-731 / CDC346-86 / RSK2980).